We begin with the raw amino-acid sequence, 202 residues long: MRLRFNKNAETSLMASPMTFKDFPIDNKKNTILEIGMGRGTMLTKLALMHPDIEYIGLEKYSTPAYSALKKAIDLNLENFHIIIGDAINLSTYFKNKIKTIWLTFSDPWPKKRHYKRRLVYRDFLKIYQNVLDKDGVVYFKTDNDMLYQFAIDELKEINAKIIYQTSDLHHCNFKIENVFTDYEEKFNKLNKNINFIAFTFN.

Positions 34, 59, 86, and 107 each coordinate S-adenosyl-L-methionine. Asp107 is a catalytic residue. Substrate contacts are provided by residues Lys111, Asp143, and 181-184 (TDYE).

The protein belongs to the class I-like SAM-binding methyltransferase superfamily. TrmB family.

The enzyme catalyses guanosine(46) in tRNA + S-adenosyl-L-methionine = N(7)-methylguanosine(46) in tRNA + S-adenosyl-L-homocysteine. It participates in tRNA modification; N(7)-methylguanine-tRNA biosynthesis. Catalyzes the formation of N(7)-methylguanine at position 46 (m7G46) in tRNA. The chain is tRNA (guanine-N(7)-)-methyltransferase from Metamycoplasma hominis (strain ATCC 23114 / DSM 25592 / NBRC 14850 / NCTC 10111 / PG21) (Mycoplasma hominis).